A 515-amino-acid polypeptide reads, in one-letter code: Maturase K (515 aa).

The protein belongs to the intron maturase 2 family. MatK subfamily.

It localises to the plastid. The protein resides in the chloroplast. Its function is as follows. Usually encoded in the trnK tRNA gene intron. Probably assists in splicing its own and other chloroplast group II introns. This Picea sitchensis (Sitka spruce) protein is Maturase K.